A 393-amino-acid chain; its full sequence is Acyl-homoserine-lactone synthase OpaM (393 aa).

It belongs to the LuxM / VanM family.

The catalysed reaction is a fatty acyl-[ACP] + S-adenosyl-L-methionine = an N-acyl-L-homoserine lactone + S-methyl-5'-thioadenosine + holo-[ACP] + H(+). The protein is Acyl-homoserine-lactone synthase OpaM (opaM) of Vibrio parahaemolyticus serotype O3:K6 (strain RIMD 2210633).